We begin with the raw amino-acid sequence, 214 residues long: Octanoyltransferase (214 aa).

Positions 34–214 (GVQKELVWLL…KFNEIFSNFN (181 aa)) constitute a BPL/LPL catalytic domain. Residues 73–80 (RGGKYTYH), 145–147 (AFG), and 158–160 (GVS) each bind substrate. Cysteine 176 (acyl-thioester intermediate) is an active-site residue.

The protein belongs to the LipB family.

The protein resides in the cytoplasm. It catalyses the reaction octanoyl-[ACP] + L-lysyl-[protein] = N(6)-octanoyl-L-lysyl-[protein] + holo-[ACP] + H(+). It functions in the pathway protein modification; protein lipoylation via endogenous pathway; protein N(6)-(lipoyl)lysine from octanoyl-[acyl-carrier-protein]: step 1/2. Its function is as follows. Catalyzes the transfer of endogenously produced octanoic acid from octanoyl-acyl-carrier-protein onto the lipoyl domains of lipoate-dependent enzymes. Lipoyl-ACP can also act as a substrate although octanoyl-ACP is likely to be the physiological substrate. In Ehrlichia chaffeensis (strain ATCC CRL-10679 / Arkansas), this protein is Octanoyltransferase.